Reading from the N-terminus, the 275-residue chain is uncharacterized protein (275 aa).

[4Fe-4S] cluster is bound by residues Cys-97, Cys-102, Cys-136, and Cys-140. Cys-140 serves as a coordination point for siroheme.

This sequence belongs to the nitrite and sulfite reductase 4Fe-4S domain family.

This is an uncharacterized protein from Methanocaldococcus jannaschii (strain ATCC 43067 / DSM 2661 / JAL-1 / JCM 10045 / NBRC 100440) (Methanococcus jannaschii).